Consider the following 504-residue polypeptide: UDP-N-acetylmuramoylalanine--D-glutamate ligase (504 aa).

Residue 132 to 138 (GTNGKTT) coordinates ATP. Residues 286 to 295 (DRDASDEPAP) are compositionally biased toward basic and acidic residues. The interval 286–305 (DRDASDEPAPKRRRKNEVAT) is disordered.

It belongs to the MurCDEF family.

The protein resides in the cytoplasm. It catalyses the reaction UDP-N-acetyl-alpha-D-muramoyl-L-alanine + D-glutamate + ATP = UDP-N-acetyl-alpha-D-muramoyl-L-alanyl-D-glutamate + ADP + phosphate + H(+). It functions in the pathway cell wall biogenesis; peptidoglycan biosynthesis. Functionally, cell wall formation. Catalyzes the addition of glutamate to the nucleotide precursor UDP-N-acetylmuramoyl-L-alanine (UMA). The sequence is that of UDP-N-acetylmuramoylalanine--D-glutamate ligase from Paraburkholderia xenovorans (strain LB400).